The sequence spans 360 residues: 4-hydroxy-3-methylbut-2-en-1-yl diphosphate synthase (flavodoxin) (360 aa).

The [4Fe-4S] cluster site is built by Cys265, Cys268, Cys300, and Glu307.

The protein belongs to the IspG family. The cofactor is [4Fe-4S] cluster.

The catalysed reaction is (2E)-4-hydroxy-3-methylbut-2-enyl diphosphate + oxidized [flavodoxin] + H2O + 2 H(+) = 2-C-methyl-D-erythritol 2,4-cyclic diphosphate + reduced [flavodoxin]. It functions in the pathway isoprenoid biosynthesis; isopentenyl diphosphate biosynthesis via DXP pathway; isopentenyl diphosphate from 1-deoxy-D-xylulose 5-phosphate: step 5/6. Its function is as follows. Converts 2C-methyl-D-erythritol 2,4-cyclodiphosphate (ME-2,4cPP) into 1-hydroxy-2-methyl-2-(E)-butenyl 4-diphosphate. This is 4-hydroxy-3-methylbut-2-en-1-yl diphosphate synthase (flavodoxin) from Brevibacillus brevis (strain 47 / JCM 6285 / NBRC 100599).